The chain runs to 236 residues: 2-C-methyl-D-erythritol 4-phosphate cytidylyltransferase (236 aa).

The protein belongs to the IspD/TarI cytidylyltransferase family. IspD subfamily. In terms of assembly, homodimer.

It carries out the reaction 2-C-methyl-D-erythritol 4-phosphate + CTP + H(+) = 4-CDP-2-C-methyl-D-erythritol + diphosphate. The protein operates within isoprenoid biosynthesis; isopentenyl diphosphate biosynthesis via DXP pathway; isopentenyl diphosphate from 1-deoxy-D-xylulose 5-phosphate: step 2/6. Its function is as follows. Catalyzes the formation of 4-diphosphocytidyl-2-C-methyl-D-erythritol from CTP and 2-C-methyl-D-erythritol 4-phosphate (MEP). This chain is 2-C-methyl-D-erythritol 4-phosphate cytidylyltransferase, found in Salmonella typhimurium (strain LT2 / SGSC1412 / ATCC 700720).